The chain runs to 260 residues: MRNASGPRGPSLATLLFLLLIPEGGCERIIGGDTVVPHSRPYMALLKLSSNTICAGALIEKNWVLTAAHCNVGKRSKFILGAHSINKEPEQQILTVKKAFPYPCYDEYTREGDLQLVRLKKKATVNRNVAILHLPKKGDDVKPGTRCRVAGWGRFGNKSAPSETLREVNITVIDRKICNDEKHYNFHPVIGLNMICAGDLRGGKDSCNGDSGSPLLCDGILRGITSFGGEKCGDRRWPGVYTFLSDKHLNWIKKIMKGSV.

A signal peptide spans 1–26 (MRNASGPRGPSLATLLFLLLIPEGGC). Positions 27 to 28 (ER) are cleaved as a propeptide — activation peptide. Residues 29–257 (IIGGDTVVPH…HLNWIKKIMK (229 aa)) form the Peptidase S1 domain. Cys54 and Cys70 are oxidised to a cystine. Catalysis depends on charge relay system residues His69 and Asp113. 3 disulfides stabilise this stretch: Cys147–Cys217, Cys178–Cys196, and Cys207–Cys232. N-linked (GlcNAc...) asparagine glycosylation is found at Asn157 and Asn169. Ser211 acts as the Charge relay system in catalysis.

This sequence belongs to the peptidase S1 family. Granzyme subfamily. Homodimer; disulfide-linked. Interacts with APEX1. In terms of tissue distribution, found in cytotoxic lymphocytes and in normal lymphoid tissues such as thymus and spleen. As to expression, more abundant in lymphoid tissues than isoform HF2.

The protein localises to the secreted. It is found in the cytoplasmic granule. The enzyme catalyses Hydrolysis of proteins, including fibronectin, type IV collagen and nucleolin. Preferential cleavage: -Arg-|-Xaa-, -Lys-|-Xaa- &gt;&gt; -Phe-|-Xaa- in small molecule substrates.. Functionally, abundant protease in the cytosolic granules of cytotoxic T-cells and NK-cells which activates caspase-independent pyroptosis when delivered into the target cell through the immunological synapse. It cleaves after Lys or Arg. Cleaves APEX1 after 'Lys-31' and destroys its oxidative repair activity. Cleaves the nucleosome assembly protein SET after 'Lys-189', which disrupts its nucleosome assembly activity and allows the SET complex to translocate into the nucleus to nick and degrade the DNA. In Mus musculus (Mouse), this protein is Granzyme A (Gzma).